We begin with the raw amino-acid sequence, 364 residues long: Fructose-bisphosphate aldolase B (364 aa).

Position 2 is an N-acetylalanine (A2). N6-succinyllysine is present on K13. Residue S36 is modified to Phosphoserine. T39 bears the Phosphothreonine mark. Residue R43 coordinates beta-D-fructose 1,6-bisphosphate. The residue at position 89 (S89) is a Phosphoserine. At T119 the chain carries Phosphothreonine. At K121 the chain carries N6-succinyllysine. Residue S132 is modified to Phosphoserine. E188 (proton acceptor) is an active-site residue. The Schiff-base intermediate with dihydroxyacetone-P role is filled by K230. S272, S276, S299, and S301 each carry phosphoserine. Position 272–274 (272–274 (SGG)) interacts with beta-D-fructose 1,6-bisphosphate. R304 is a binding site for beta-D-fructose 1,6-bisphosphate. S309 carries the phosphoserine modification. Position 317 is an N6-succinyllysine (K317).

Belongs to the class I fructose-bisphosphate aldolase family. Homotetramer. Interacts with BBS1, BBS2, BBS4 and BBS7. Forms a ternary complex with G6PD and TP53; this interaction is direct.

The protein localises to the cytoplasm. The protein resides in the cytosol. Its subcellular location is the cytoskeleton. It localises to the microtubule organizing center. It is found in the centrosome. The protein localises to the centriolar satellite. It carries out the reaction beta-D-fructose 1,6-bisphosphate = D-glyceraldehyde 3-phosphate + dihydroxyacetone phosphate. It catalyses the reaction beta-D-fructose 1-phosphate = D-glyceraldehyde + dihydroxyacetone phosphate. The protein operates within carbohydrate degradation; glycolysis; D-glyceraldehyde 3-phosphate and glycerone phosphate from D-glucose: step 4/4. Its pathway is carbohydrate biosynthesis; gluconeogenesis. It functions in the pathway carbohydrate metabolism; fructose metabolism. Functionally, catalyzes the aldol cleavage of fructose 1,6-biphosphate to form two triosephosphates dihydroxyacetone phosphate and D-glyceraldehyde 3-phosphate in glycolysis as well as the reverse stereospecific aldol addition reaction in gluconeogenesis. In fructolysis, metabolizes fructose 1-phosphate derived from the phosphorylation of dietary fructose by fructokinase into dihydroxyacetone phosphate and D-glyceraldehyde. Acts as an adapter independently of its enzymatic activity, exerts a tumor suppressor role by stabilizing the ternary complex with G6PD and TP53 to inhibit G6PD activity and keep oxidative pentose phosphate metabolism in check. The chain is Fructose-bisphosphate aldolase B from Homo sapiens (Human).